Consider the following 295-residue polypeptide: Protease HtpX (295 aa).

A run of 2 helical transmembrane segments spans residues 4–24 (ILLF…TLSL) and 41–61 (SSLL…SLFI). Histidine 147 contributes to the Zn(2+) binding site. Glutamate 148 is an active-site residue. Histidine 151 lines the Zn(2+) pocket. Transmembrane regions (helical) follow at residues 158–178 (VTLA…ARII) and 199–219 (VATI…VMWF). Zn(2+) is bound at residue glutamate 224.

It belongs to the peptidase M48B family. Zn(2+) is required as a cofactor.

It is found in the cell inner membrane. The protein is Protease HtpX of Pseudomonas putida (strain ATCC 700007 / DSM 6899 / JCM 31910 / BCRC 17059 / LMG 24140 / F1).